The chain runs to 492 residues: Probable malate:quinone oxidoreductase 1 (492 aa).

It belongs to the MQO family. It depends on FAD as a cofactor.

It catalyses the reaction (S)-malate + a quinone = a quinol + oxaloacetate. The protein operates within carbohydrate metabolism; tricarboxylic acid cycle; oxaloacetate from (S)-malate (quinone route): step 1/1. The chain is Probable malate:quinone oxidoreductase 1 from Staphylococcus epidermidis (strain ATCC 35984 / DSM 28319 / BCRC 17069 / CCUG 31568 / BM 3577 / RP62A).